A 355-amino-acid chain; its full sequence is UDP-N-acetylglucosamine--N-acetylmuramyl-(pentapeptide) pyrophosphoryl-undecaprenol N-acetylglucosamine transferase (355 aa).

UDP-N-acetyl-alpha-D-glucosamine-binding positions include 15 to 17, asparagine 127, arginine 163, serine 191, isoleucine 244, 263 to 268, and glutamine 288; these read TGG and ALTVSE.

Belongs to the glycosyltransferase 28 family. MurG subfamily.

The protein resides in the cell inner membrane. It carries out the reaction di-trans,octa-cis-undecaprenyl diphospho-N-acetyl-alpha-D-muramoyl-L-alanyl-D-glutamyl-meso-2,6-diaminopimeloyl-D-alanyl-D-alanine + UDP-N-acetyl-alpha-D-glucosamine = di-trans,octa-cis-undecaprenyl diphospho-[N-acetyl-alpha-D-glucosaminyl-(1-&gt;4)]-N-acetyl-alpha-D-muramoyl-L-alanyl-D-glutamyl-meso-2,6-diaminopimeloyl-D-alanyl-D-alanine + UDP + H(+). It functions in the pathway cell wall biogenesis; peptidoglycan biosynthesis. Its function is as follows. Cell wall formation. Catalyzes the transfer of a GlcNAc subunit on undecaprenyl-pyrophosphoryl-MurNAc-pentapeptide (lipid intermediate I) to form undecaprenyl-pyrophosphoryl-MurNAc-(pentapeptide)GlcNAc (lipid intermediate II). This chain is UDP-N-acetylglucosamine--N-acetylmuramyl-(pentapeptide) pyrophosphoryl-undecaprenol N-acetylglucosamine transferase, found in Escherichia coli O157:H7.